A 246-amino-acid polypeptide reads, in one-letter code: Probable transcriptional regulatory protein RD1_2018 (246 aa).

It belongs to the TACO1 family.

Its subcellular location is the cytoplasm. This Roseobacter denitrificans (strain ATCC 33942 / OCh 114) (Erythrobacter sp. (strain OCh 114)) protein is Probable transcriptional regulatory protein RD1_2018.